A 222-amino-acid chain; its full sequence is UPF0502 protein Lcho_2066 (222 aa).

Belongs to the UPF0502 family.

The polypeptide is UPF0502 protein Lcho_2066 (Leptothrix cholodnii (strain ATCC 51168 / LMG 8142 / SP-6) (Leptothrix discophora (strain SP-6))).